The following is a 40-amino-acid chain: Photosystem II reaction center protein J (40 aa).

Residues 8–28 traverse the membrane as a helical segment; it reads IPLWVVATIAGLGVITVVGIF.

The protein belongs to the PsbJ family. As to quaternary structure, PSII is composed of 1 copy each of membrane proteins PsbA, PsbB, PsbC, PsbD, PsbE, PsbF, PsbH, PsbI, PsbJ, PsbK, PsbL, PsbM, PsbT, PsbX, PsbY, PsbZ, Psb30/Ycf12, peripheral proteins PsbO, CyanoQ (PsbQ), PsbU, PsbV and a large number of cofactors. It forms dimeric complexes.

It localises to the cellular thylakoid membrane. Its function is as follows. One of the components of the core complex of photosystem II (PSII). PSII is a light-driven water:plastoquinone oxidoreductase that uses light energy to abstract electrons from H(2)O, generating O(2) and a proton gradient subsequently used for ATP formation. It consists of a core antenna complex that captures photons, and an electron transfer chain that converts photonic excitation into a charge separation. This is Photosystem II reaction center protein J from Nostoc sp. (strain PCC 7120 / SAG 25.82 / UTEX 2576).